The following is a 229-amino-acid chain: Orotate phosphoribosyltransferase (229 aa).

5-phospho-alpha-D-ribose 1-diphosphate is bound by residues Arg107, Lys108, Lys111, His113, and 133 to 141 (EDLTTAGGS). Residue Thr137 participates in orotate binding.

It belongs to the purine/pyrimidine phosphoribosyltransferase family. PyrE subfamily. Homodimer. Mg(2+) is required as a cofactor.

The catalysed reaction is orotidine 5'-phosphate + diphosphate = orotate + 5-phospho-alpha-D-ribose 1-diphosphate. The protein operates within pyrimidine metabolism; UMP biosynthesis via de novo pathway; UMP from orotate: step 1/2. Functionally, catalyzes the transfer of a ribosyl phosphate group from 5-phosphoribose 1-diphosphate to orotate, leading to the formation of orotidine monophosphate (OMP). The protein is Orotate phosphoribosyltransferase of Rhizobium johnstonii (strain DSM 114642 / LMG 32736 / 3841) (Rhizobium leguminosarum bv. viciae).